The primary structure comprises 274 residues: Phosphate import ATP-binding protein PstB (274 aa).

Residues 1–11 show a composition bias toward polar residues; that stretch reads MSEISIATSVP. The tract at residues 1 to 21 is disordered; that stretch reads MSEISIATSVPSGPGPLIGNQ. The 242-residue stretch at 28-269 folds into the ABC transporter domain; the sequence is VIVRDLNFYY…PNDRRTQDYI (242 aa). Residue 60–67 participates in ATP binding; that stretch reads GPSGCGKS.

The protein belongs to the ABC transporter superfamily. Phosphate importer (TC 3.A.1.7) family. The complex is composed of two ATP-binding proteins (PstB), two transmembrane proteins (PstC and PstA) and a solute-binding protein (PstS).

The protein resides in the cell inner membrane. It catalyses the reaction phosphate(out) + ATP + H2O = ADP + 2 phosphate(in) + H(+). Part of the ABC transporter complex PstSACB involved in phosphate import. Responsible for energy coupling to the transport system. This Rhodopseudomonas palustris (strain BisB5) protein is Phosphate import ATP-binding protein PstB.